Here is a 270-residue protein sequence, read N- to C-terminus: Sulfur carrier protein FdhD (270 aa).

C108 functions as the Cysteine persulfide intermediate in the catalytic mechanism. Mo-bis(molybdopterin guanine dinucleotide) is bound at residue 247–252 (FIRDGR).

It belongs to the FdhD family.

It localises to the cytoplasm. Functionally, required for formate dehydrogenase (FDH) activity. Acts as a sulfur carrier protein that transfers sulfur from IscS to the molybdenum cofactor prior to its insertion into FDH. This is Sulfur carrier protein FdhD from Halalkalibacterium halodurans (strain ATCC BAA-125 / DSM 18197 / FERM 7344 / JCM 9153 / C-125) (Bacillus halodurans).